Reading from the N-terminus, the 412-residue chain is MKDMGQKARHAAALLAVMSSEQKNKALEMIALSLEAQSAEILQANHQDLVNAAQNNLNVAMVDRLKLDKVRLCTIIDSVRQVACLPDPVGQVMSEWTRPNGLHIRRVRTPLGVIGIIYESRPSVTIDASILCLKSGNAAILRGGSDSFHSAHALHSALVKGLKEAGLPQDAIQMVGTKDRDVVGEMLKGLDGAIDVIVPRGGKDLVARVQSDARVPIFAHLEGLCHIYIDQSADLDMARNIVLNAKLRRTGICGAVETVLIDRQALKKFLPVLTALQEKGCEIRATEDIVFLLPDVKLASEEDWSQEYLDAILSVKTVEGIEGAIAHIRRYSSGHTESIIAEDMKVVKIFFNCLDSAILLHNASTQFADGGEFGFGAEIGIATGKMHARGPVGVEQLTSFQYHVKGNGQVRS.

It belongs to the gamma-glutamyl phosphate reductase family.

It is found in the cytoplasm. The enzyme catalyses L-glutamate 5-semialdehyde + phosphate + NADP(+) = L-glutamyl 5-phosphate + NADPH + H(+). The protein operates within amino-acid biosynthesis; L-proline biosynthesis; L-glutamate 5-semialdehyde from L-glutamate: step 2/2. Catalyzes the NADPH-dependent reduction of L-glutamate 5-phosphate into L-glutamate 5-semialdehyde and phosphate. The product spontaneously undergoes cyclization to form 1-pyrroline-5-carboxylate. This Bartonella quintana (strain Toulouse) (Rochalimaea quintana) protein is Gamma-glutamyl phosphate reductase.